Reading from the N-terminus, the 404-residue chain is Na(+)/H(+) antiporter NhaA 2 (404 aa).

Helical transmembrane passes span Gly24 to Gly44, Val67 to Ile87, Ile103 to Phe123, Gly132 to Ala152, Val161 to Phe181, Ser184 to Ala204, Ile216 to Ala236, Thr266 to Ile286, Ile303 to Ile323, Leu339 to Leu359, and Met372 to Ile392.

The protein belongs to the NhaA Na(+)/H(+) (TC 2.A.33) antiporter family.

It localises to the cell membrane. It catalyses the reaction Na(+)(in) + 2 H(+)(out) = Na(+)(out) + 2 H(+)(in). Its function is as follows. Na(+)/H(+) antiporter that extrudes sodium in exchange for external protons. The sequence is that of Na(+)/H(+) antiporter NhaA 2 from Clostridium beijerinckii (strain ATCC 51743 / NCIMB 8052) (Clostridium acetobutylicum).